The following is a 104-amino-acid chain: uncharacterized protein (104 aa).

Residues 81–97 (CLLMLPCISVVMSISSV) traverse the membrane as a helical segment.

The protein localises to the cell membrane. This is an uncharacterized protein from Bacillus subtilis (strain 168).